A 195-amino-acid chain; its full sequence is Glycerol-3-phosphate acyltransferase (195 aa).

6 helical membrane-spanning segments follow: residues 4-24 (GLIL…GLLL), 53-73 (GLAA…VLIA), 80-100 (TAVW…WLGF), 110-130 (LGVL…IWLA), 133-153 (FLFR…PIAL), and 154-174 (YFLS…IVFI).

It belongs to the PlsY family. In terms of assembly, probably interacts with PlsX.

Its subcellular location is the cell inner membrane. It carries out the reaction an acyl phosphate + sn-glycerol 3-phosphate = a 1-acyl-sn-glycero-3-phosphate + phosphate. It participates in lipid metabolism; phospholipid metabolism. In terms of biological role, catalyzes the transfer of an acyl group from acyl-phosphate (acyl-PO(4)) to glycerol-3-phosphate (G3P) to form lysophosphatidic acid (LPA). This enzyme utilizes acyl-phosphate as fatty acyl donor, but not acyl-CoA or acyl-ACP. In Mesorhizobium japonicum (strain LMG 29417 / CECT 9101 / MAFF 303099) (Mesorhizobium loti (strain MAFF 303099)), this protein is Glycerol-3-phosphate acyltransferase.